The primary structure comprises 839 residues: uncharacterized protein (839 aa).

Disordered stretches follow at residues 504–611 (TVSP…NVVN), 627–646 (KNNN…DNHC), and 682–839 (NHNY…SLGS). The span at 509–611 (GNNNVTGDVD…EGSNNCNVVN (103 aa)) shows a compositional bias: low complexity. The segment covering 636–646 (NEYKNSNDNHC) has biased composition (basic and acidic residues). 2 stretches are compositionally biased toward low complexity: residues 689 to 704 (NGNN…NNNN) and 713 to 753 (QQQP…NNNK). The stretch at 726–764 (QQSQQQPQLQQKKQQIQEEQQNLNNNNKSIEDDEEAFNS) forms a coiled coil. Positions 765–776 (DDEHDHEDDSIR) are enriched in basic and acidic residues. Over residues 809 to 823 (EDNDDDSDISDSDSD) the composition is skewed to acidic residues.

This is an uncharacterized protein from Dictyostelium discoideum (Social amoeba).